Consider the following 256-residue polypeptide: Imidazole glycerol phosphate synthase subunit HisF (256 aa).

Catalysis depends on residues aspartate 13 and aspartate 132.

Belongs to the HisA/HisF family. Heterodimer of HisH and HisF.

It is found in the cytoplasm. It catalyses the reaction 5-[(5-phospho-1-deoxy-D-ribulos-1-ylimino)methylamino]-1-(5-phospho-beta-D-ribosyl)imidazole-4-carboxamide + L-glutamine = D-erythro-1-(imidazol-4-yl)glycerol 3-phosphate + 5-amino-1-(5-phospho-beta-D-ribosyl)imidazole-4-carboxamide + L-glutamate + H(+). It participates in amino-acid biosynthesis; L-histidine biosynthesis; L-histidine from 5-phospho-alpha-D-ribose 1-diphosphate: step 5/9. Functionally, IGPS catalyzes the conversion of PRFAR and glutamine to IGP, AICAR and glutamate. The HisF subunit catalyzes the cyclization activity that produces IGP and AICAR from PRFAR using the ammonia provided by the HisH subunit. The polypeptide is Imidazole glycerol phosphate synthase subunit HisF (Leptospira interrogans serogroup Icterohaemorrhagiae serovar copenhageni (strain Fiocruz L1-130)).